The sequence spans 134 residues: Profilin-2 (134 aa).

C13 and C118 are joined by a disulfide. Positions 84–100 (AVIRGKKGSGGITIKKT) match the Involved in PIP2 interaction motif. Position 114 is a phosphothreonine (T114).

The protein belongs to the profilin family. In terms of assembly, occurs in many kinds of cells as a complex with monomeric actin in a 1:1 ratio. Post-translationally, phosphorylated by MAP kinases.

The protein resides in the cytoplasm. Its subcellular location is the cytoskeleton. Its function is as follows. Binds to actin and affects the structure of the cytoskeleton. At high concentrations, profilin prevents the polymerization of actin, whereas it enhances it at low concentrations. This Olea europaea (Common olive) protein is Profilin-2.